The primary structure comprises 306 residues: Ribokinase (306 aa).

Substrate-binding positions include 12-14, 40-44, and Glu141; these read NAD and GKGAN. ATP-binding positions include Asn185 and 221-226; that span reads TLGAKG. Residues Asp247 and Thr249 each contribute to the K(+) site. 252–253 is a binding site for ATP; that stretch reads GD. Asp253 provides a ligand contact to substrate. Catalysis depends on Asp253, which acts as the Proton acceptor. K(+) is bound by residues Ser283, Lys286, Gly288, and Ser292.

The protein belongs to the carbohydrate kinase PfkB family. Ribokinase subfamily. Homodimer. The cofactor is Mg(2+).

Its subcellular location is the cytoplasm. It carries out the reaction D-ribose + ATP = D-ribose 5-phosphate + ADP + H(+). Its pathway is carbohydrate metabolism; D-ribose degradation; D-ribose 5-phosphate from beta-D-ribopyranose: step 2/2. Its activity is regulated as follows. Activated by a monovalent cation that binds near, but not in, the active site. The most likely occupant of the site in vivo is potassium. Ion binding induces a conformational change that may alter substrate affinity. Its function is as follows. Catalyzes the phosphorylation of ribose at O-5 in a reaction requiring ATP and magnesium. The resulting D-ribose-5-phosphate can then be used either for sythesis of nucleotides, histidine, and tryptophan, or as a component of the pentose phosphate pathway. The sequence is that of Ribokinase from Haemophilus influenzae (strain ATCC 51907 / DSM 11121 / KW20 / Rd).